Consider the following 732-residue polypeptide: ATP-dependent RNA helicase DBP7 (732 aa).

Residues 1 to 91 (MIEDDGMLLN…QSNNESVKDV (91 aa)) are disordered. 2 stretches are compositionally biased toward basic and acidic residues: residues 42–56 (MMME…KTFE) and 64–75 (DTNKKPKSDSSG). The segment covering 76-86 (RKSYNQQSNNE) has biased composition (polar residues). Positions 144–173 (DNFDSLKIEQQLVNHLNEKMRIQKPTSIQK) match the Q motif motif. The region spanning 178-372 (QLLSSKNNDL…NVALQNYKMI (195 aa)) is the Helicase ATP-binding domain. Position 191 to 198 (191 to 198 (AQTGSGKT)) interacts with ATP. The DEAD box signature appears at 307-310 (DEAD). The region spanning 420–599 (QKKKKLDYVS…KLVNYTNDLL (180 aa)) is the Helicase C-terminal domain. The interval 692-711 (MGLQNTKNGGEAKKNSKESA) is disordered. Residues 701-711 (GEAKKNSKESA) are compositionally biased toward basic and acidic residues.

The protein belongs to the DEAD box helicase family. DDX31/DBP7 subfamily.

It localises to the nucleus. The protein localises to the nucleolus. It carries out the reaction ATP + H2O = ADP + phosphate + H(+). ATP-binding RNA helicase involved in the biogenesis of 60S ribosomal subunits and is required for the normal formation of 25S and 5.8S rRNAs. This chain is ATP-dependent RNA helicase DBP7 (DBP7), found in Vanderwaltozyma polyspora (strain ATCC 22028 / DSM 70294 / BCRC 21397 / CBS 2163 / NBRC 10782 / NRRL Y-8283 / UCD 57-17) (Kluyveromyces polysporus).